The chain runs to 415 residues: Cysteate synthase (415 aa).

Lys104 bears the N6-(pyridoxal phosphate)lysine mark. Pyridoxal 5'-phosphate is bound by residues Asn131 and Thr376.

This sequence belongs to the threonine synthase family. Cysteate synthase subfamily. Homotrimer. Requires pyridoxal 5'-phosphate as cofactor.

It carries out the reaction O-phospho-L-serine + sulfite + H(+) = L-cysteate + phosphate. It participates in cofactor biosynthesis; coenzyme M biosynthesis. Its function is as follows. Specifically catalyzes the beta-elimination of phosphate from L-phosphoserine and the beta-addition of sulfite to the dehydroalanine intermediate to produce L-cysteate. The sequence is that of Cysteate synthase from Methanothrix thermoacetophila (strain DSM 6194 / JCM 14653 / NBRC 101360 / PT) (Methanosaeta thermophila).